Here is a 385-residue protein sequence, read N- to C-terminus: Acetate kinase (385 aa).

Asparagine 9 serves as a coordination point for Mg(2+). An ATP-binding site is contributed by lysine 16. Arginine 75 contributes to the substrate binding site. The active-site Proton donor/acceptor is aspartate 132. ATP is bound by residues 192-196 (HLGNG), 266-268 (DFR), and 314-318 (GIGEN). A Mg(2+)-binding site is contributed by glutamate 368.

It belongs to the acetokinase family. In terms of assembly, homodimer. The cofactor is Mg(2+). It depends on Mn(2+) as a cofactor.

Its subcellular location is the cytoplasm. It carries out the reaction acetate + ATP = acetyl phosphate + ADP. The protein operates within metabolic intermediate biosynthesis; acetyl-CoA biosynthesis; acetyl-CoA from acetate: step 1/2. Its function is as follows. Catalyzes the formation of acetyl phosphate from acetate and ATP. Can also catalyze the reverse reaction. The polypeptide is Acetate kinase (Mycobacterium bovis (strain ATCC BAA-935 / AF2122/97)).